We begin with the raw amino-acid sequence, 230 residues long: MSKLVLIRHGQSEWNLSNQFTGWVDVNLSEKGVEEAKKAGRLIKEHGLEFDQAYTSLLTRAIKTLHYALEESDQLWIPETKTWRLNERHYGALQGLNKKDTAEKYGDEQVHIWRRSYDVLPPAIDDDNEYSQAHDRRYANLDPHIVPKAENLHVTLDRVMPFWEDHIAPDLLDGKNVIIAAHGNSLRALTKYIENISDDDIMDLEMKTGEPVVYTFDDKLDVVNKEKLDD.

Substrate is bound by residues 8-15 (RHGQSEWN), 21-22 (TG), arginine 60, 87-90 (ERHY), lysine 98, 114-115 (RR), and 183-184 (GN). The Tele-phosphohistidine intermediate role is filled by histidine 9. Glutamate 87 acts as the Proton donor/acceptor in catalysis.

Belongs to the phosphoglycerate mutase family. BPG-dependent PGAM subfamily.

The catalysed reaction is (2R)-2-phosphoglycerate = (2R)-3-phosphoglycerate. It participates in carbohydrate degradation; glycolysis; pyruvate from D-glyceraldehyde 3-phosphate: step 3/5. In terms of biological role, catalyzes the interconversion of 2-phosphoglycerate and 3-phosphoglycerate. The protein is 2,3-bisphosphoglycerate-dependent phosphoglycerate mutase 1 of Lactobacillus johnsonii (strain CNCM I-12250 / La1 / NCC 533).